A 448-amino-acid polypeptide reads, in one-letter code: Probable metal transport system membrane protein CPn_0347/CP_0413/CPj0347/CpB0354 (448 aa).

Helical transmembrane passes span F15–S35, A47–A67, I69–F89, S100–V120, F144–W164, L193–S213, I233–V253, and L270–F290.

Belongs to the ABC-3 integral membrane protein family.

It is found in the cell inner membrane. Part of an ATP-driven transport system CPn_0346/CPn_0347/CPn_0348/CPn_0349 for a metal. The polypeptide is Probable metal transport system membrane protein CPn_0347/CP_0413/CPj0347/CpB0354 (Chlamydia pneumoniae (Chlamydophila pneumoniae)).